A 735-amino-acid polypeptide reads, in one-letter code: 1,4-alpha-glucan branching enzyme GlgB 1 (735 aa).

The Nucleophile role is filled by aspartate 418. Residue glutamate 471 is the Proton donor of the active site.

Belongs to the glycosyl hydrolase 13 family. GlgB subfamily. In terms of assembly, monomer.

The catalysed reaction is Transfers a segment of a (1-&gt;4)-alpha-D-glucan chain to a primary hydroxy group in a similar glucan chain.. It functions in the pathway glycan biosynthesis; glycogen biosynthesis. Functionally, catalyzes the formation of the alpha-1,6-glucosidic linkages in glycogen by scission of a 1,4-alpha-linked oligosaccharide from growing alpha-1,4-glucan chains and the subsequent attachment of the oligosaccharide to the alpha-1,6 position. The polypeptide is 1,4-alpha-glucan branching enzyme GlgB 1 (Rhizobium johnstonii (strain DSM 114642 / LMG 32736 / 3841) (Rhizobium leguminosarum bv. viciae)).